Consider the following 1443-residue polypeptide: DNA polymerase III PolC-type (1443 aa).

One can recognise an Exonuclease domain in the interval 408-567; it reads FVIFDIETTG…YDTQALKKVF (160 aa).

This sequence belongs to the DNA polymerase type-C family. PolC subfamily.

It localises to the cytoplasm. The catalysed reaction is DNA(n) + a 2'-deoxyribonucleoside 5'-triphosphate = DNA(n+1) + diphosphate. Functionally, required for replicative DNA synthesis. This DNA polymerase also exhibits 3' to 5' exonuclease activity. This Mycoplasma pneumoniae (strain ATCC 29342 / M129 / Subtype 1) (Mycoplasmoides pneumoniae) protein is DNA polymerase III PolC-type.